The sequence spans 489 residues: Probable capsid protein (489 aa).

Over residues 87–101 the composition is skewed to basic and acidic residues; the sequence is RMERGESSETKREQQ. The interval 87–111 is disordered; that stretch reads RMERGESSETKREQQDLGATRKRKI. The Nuclear localization signal signature appears at 107-110; sequence RKRK. A CCHC-type zinc finger spans residues 409–426; the sequence is CRCWICTEEGHYANECPN. Residues 466-489 are disordered; sequence ETTSEEESTTDSDSSSSDDEQLSF.

The protein belongs to the caulimoviridae capsid protein family. In terms of assembly, interacts (via nuclear localization signal) with host importin alpha.

The protein localises to the virion. It is found in the host nucleus. In terms of biological role, self assembles to form an icosahedral capsid, about 50 nm in diameter, nm, composed of 420 subunits of the viral capsid protein. The capsid encapsulates the genomic dsDNA. Following virus entry into host cell, provides nuclear import of the viral genome. Virus particles do not enter the nucleus, but dock at the nuclear membrane through the interaction with host importins. The polypeptide is Probable capsid protein (Scrophularia californica (California bee plant)).